The following is a 141-amino-acid chain: Large ribosomal subunit protein uL11 (141 aa).

It belongs to the universal ribosomal protein uL11 family. Part of the ribosomal stalk of the 50S ribosomal subunit. Interacts with L10 and the large rRNA to form the base of the stalk. L10 forms an elongated spine to which L12 dimers bind in a sequential fashion forming a multimeric L10(L12)X complex. One or more lysine residues are methylated.

In terms of biological role, forms part of the ribosomal stalk which helps the ribosome interact with GTP-bound translation factors. This Leptospira biflexa serovar Patoc (strain Patoc 1 / Ames) protein is Large ribosomal subunit protein uL11.